The primary structure comprises 910 residues: Triacylglycerol lipase 4 (910 aa).

The span at 51 to 66 (SKDNSDVERVEEDAGK) shows a compositional bias: basic and acidic residues. The interval 51 to 120 (SKDNSDVERV…TDEGEDERQG (70 aa)) is disordered. At S55 the chain carries Phosphoserine. Residues 70–85 (TGKNKTTNKVNFNLDT) show a composition bias toward polar residues. Over residues 90 to 116 (KLDDDQETVTENENNDIEMVETDEGED) the composition is skewed to acidic residues. In terms of domain architecture, PNPLA spans 282–483 (LVLSGGGTFG…DNDLPISRLS (202 aa)). Residues 286 to 291 (GGGTFG) carry the GXGXXG motif. Positions 313 to 317 (GSSAG) match the GXSXG motif. Catalysis depends on S315, which acts as the Nucleophile. D470 serves as the catalytic Proton acceptor. Disordered regions lie at residues 657–683 (EQTS…DNHI) and 713–777 (SPSG…PILQ). Over residues 666 to 683 (PENSTLLTRTPTKGDNHI) the composition is skewed to polar residues. Position 675 is a phosphothreonine; by Cdk1 (T675). 4 positions are modified to phosphoserine: S737, S749, S751, and S836. The segment covering 739-768 (TISTSRRPAKSFSFSVASPTSRMLRQSSKI) has biased composition (polar residues). The tract at residues 874-910 (RRHSIDGRPPSQATKSSPFRSRPSSSTQHKSTTSFTQ) is disordered. A compositionally biased stretch (low complexity) spans 889–899 (SSPFRSRPSSS). At S890 the chain carries Phosphoserine; by Cdk1. Residues 900–910 (TQHKSTTSFTQ) show a composition bias toward polar residues.

In terms of processing, phosphorylation at Thr-675 and Ser-890 by Cdk1/CDC28 stimulates enzyme activity in vivo.

The protein resides in the lipid droplet. The catalysed reaction is a triacylglycerol + H2O = a diacylglycerol + a fatty acid + H(+). The enzyme catalyses 1,2,3-tri-(9Z-octadecenoyl)-glycerol + H2O = di-(9Z)-octadecenoylglycerol + (9Z)-octadecenoate + H(+). It catalyses the reaction 1,2-dihexadecanoyl-sn-glycero-3-phosphocholine + H2O = 1-hexadecanoyl-sn-glycero-3-phosphocholine + hexadecanoate + H(+). It carries out the reaction cholesteryl (9Z-octadecenoate) + H2O = cholesterol + (9Z)-octadecenoate + H(+). The catalysed reaction is 1-(9Z-octadecenoyl)-sn-glycero-3-phosphate + (9Z)-octadecenoyl-CoA = 1,2-di-(9Z-octadecenoyl)-sn-glycero-3-phosphate + CoA. With respect to regulation, phosphorylated and activated by cyclin-dependent kinase 1 (Cdk1/CDC28). Loses its lipolytic activity in cells lacking nonpolar lipids, but retains its side activity as lysophospholipid acyltransferase. Its function is as follows. Lipid particle-localized triacylglycerol (TAG) lipase. The lipid droplet/particle is a lipid storage compartment which serves as a depot of energy and building blocks for membrane lipid biosynthesis. Involved in the mobilization of the non-polar storage lipids triacylglycerols (TAGs) from lipid particles by hydrolysis of TAGs, releasing and supplying specific fatty acids to the appropriate metabolic pathways. Also has steryl ester (SE) hydrolase and phospholipase A(2) (PLA(2)) activities, and catalyzes the acylation of lysophosphatidic acid (LPA). Contributes to early bud formation in late G1 phase of the cell cycle upon phosphorylation and activation by cyclin-dependent kinase 1 (Cdk1/CDC28). In Saccharomyces cerevisiae (strain ATCC 204508 / S288c) (Baker's yeast), this protein is Triacylglycerol lipase 4 (TGL4).